The primary structure comprises 475 residues: Homeobox even-skipped homolog protein 2 (475 aa).

Disordered stretches follow at residues 82–113 (PSSE…AEAD) and 155–189 (TSAS…SGAD). Low complexity predominate over residues 83–96 (SSESTVSSEIASAT). Positions 160-186 (SGLGSLHGGGGGGNSGAAALGGSGSGS) are enriched in gly residues. Positions 191 to 250 (VRRYRTAFTREQIARLEKEFYRENYVSRPRRCELAAALNLPETTIKVWFQNRRMKDKRQR) form a DNA-binding region, homeobox.

The protein belongs to the even-skipped homeobox family.

It localises to the nucleus. The sequence is that of Homeobox even-skipped homolog protein 2 (Evx2) from Mus musculus (Mouse).